Consider the following 213-residue polypeptide: High frequency lysogenization protein HflD homolog (213 aa).

It belongs to the HflD family.

Its subcellular location is the cytoplasm. It is found in the cell inner membrane. This chain is High frequency lysogenization protein HflD homolog, found in Alcanivorax borkumensis (strain ATCC 700651 / DSM 11573 / NCIMB 13689 / SK2).